The chain runs to 483 residues: Essential nuclear protein 1 (483 aa).

Disordered stretches follow at residues 1–21 (MARA…LKDL), 33–55 (KKKL…GYID), 67–123 (KEQQ…EGDY), and 171–200 (ESQV…GLKS). Residues 96 to 123 (YDDEDEDEDEDEEAFGEDISDFEPEGDY) are compositionally biased toward acidic residues. Residue Ser172 is modified to Phosphoserine; by ATM or ATR. Over residues 174–183 (VEDMQDDEPL) the composition is skewed to acidic residues. The segment covering 185–198 (NEQNTSRGNISSGL) has biased composition (polar residues). Phosphoserine occurs at positions 190 and 404.

Belongs to the bystin family.

The protein localises to the cytoplasm. It localises to the nucleus. It is found in the nucleolus. Required for normal export of the pre-40S particles from the nucleus to the cytoplasm. Its subcellular location and association with pre-40S subunit shifts from mixed cytoplasm/nucleus to all nuclear in RPS19 disruptions, suggesting it acts after the ribosomal protein. The sequence is that of Essential nuclear protein 1 (ENP1) from Saccharomyces cerevisiae (strain ATCC 204508 / S288c) (Baker's yeast).